Consider the following 238-residue polypeptide: Ribosomal RNA small subunit methyltransferase I (238 aa).

Belongs to the methyltransferase superfamily. RsmI family.

It localises to the cytoplasm. It catalyses the reaction cytidine(1402) in 16S rRNA + S-adenosyl-L-methionine = 2'-O-methylcytidine(1402) in 16S rRNA + S-adenosyl-L-homocysteine + H(+). Functionally, catalyzes the 2'-O-methylation of the ribose of cytidine 1402 (C1402) in 16S rRNA. This chain is Ribosomal RNA small subunit methyltransferase I, found in Mesomycoplasma conjunctivae (strain ATCC 25834 / NCTC 10147 / HRC/581) (Mycoplasma conjunctivae).